Here is a 546-residue protein sequence, read N- to C-terminus: Fusion glycoprotein F0 (546 aa).

An N-terminal signal peptide occupies residues 1-19; the sequence is MKILFATLLVVTTPHLVTG. Over 20-491 the chain is Extracellular; that stretch reads QIHWGNLSKI…TIKGASVTNT (472 aa). Residues Asn25, Asn57, and Asn63 are each glycosylated (N-linked (GlcNAc...) asparagine; by host). Positions 109–133 are fusion peptide; it reads FAGVALAGAALGVATAAQITAGIAL. Residues 134–162 adopt a coiled-coil conformation; sequence HQSMMNTQAIESLKASLETTNQAIEEIRQ. Disulfide bonds link Cys330–Cys339, Cys354–Cys362, Cys386–Cys391, and Cys393–Cys416. Residues 458–483 adopt a coiled-coil conformation; sequence NLGNAVTKLEKAKDLLDSSDLILETI. The chain crosses the membrane as a helical span at residues 492–512; the sequence is GHILVGAGLIAVVGILIVTCC. Residues 513 to 546 lie on the Cytoplasmic side of the membrane; it reads CRKRSNDSKVSTVILNPGLKPDLTGTSKSYVRSL.

This sequence belongs to the paramyxoviruses fusion glycoprotein family. As to quaternary structure, homotrimer of disulfide-linked F1-F2. In terms of processing, the inactive precursor F0 is glycosylated and proteolytically cleaved into F1 and F2 to be functionally active. The cleavage is mediated by cellular proteases during the transport and maturation of the polypeptide.

Its subcellular location is the virion membrane. It localises to the host cell membrane. In terms of biological role, class I viral fusion protein. Under the current model, the protein has at least 3 conformational states: pre-fusion native state, pre-hairpin intermediate state, and post-fusion hairpin state. During viral and plasma cell membrane fusion, the heptad repeat (HR) regions assume a trimer-of-hairpins structure, positioning the fusion peptide in close proximity to the C-terminal region of the ectodomain. The formation of this structure appears to drive apposition and subsequent fusion of viral and plasma cell membranes. Directs fusion of viral and cellular membranes leading to delivery of the nucleocapsid into the cytoplasm. This fusion is pH independent and occurs directly at the outer cell membrane. The trimer of F1-F2 (F protein) probably interacts with HN at the virion surface. Upon HN binding to its cellular receptor, the hydrophobic fusion peptide is unmasked and interacts with the cellular membrane, inducing the fusion between cell and virion membranes. Later in infection, F proteins expressed at the plasma membrane of infected cells could mediate fusion with adjacent cells to form syncytia, a cytopathic effect that could lead to tissue necrosis. The sequence is that of Fusion glycoprotein F0 (F) from Rinderpest virus (strain RBOK) (RDV).